A 417-amino-acid polypeptide reads, in one-letter code: Prostaglandin E2 receptor EP3 subtype (417 aa).

Residues Met-1–Ala-52 are Extracellular-facing. 2 N-linked (GlcNAc...) asparagine glycosylation sites follow: Asn-17 and Asn-35. A helical transmembrane segment spans residues Phe-53–Arg-77. Topologically, residues Arg-78–Cys-90 are cytoplasmic. Residues Ile-91 to Val-111 traverse the membrane as a helical segment. The Extracellular portion of the chain corresponds to Leu-112–Thr-130. A helical membrane pass occupies residues Phe-131–Val-152. Over Glu-153–Arg-174 the chain is Cytoplasmic. A helical membrane pass occupies residues Ala-175–Gly-196. Residues Gln-197–Asn-226 lie on the Extracellular side of the membrane. N-linked (GlcNAc...) asparagine glycosylation occurs at Asn-216. A helical membrane pass occupies residues Val-227–Ile-252. Topologically, residues Lys-253 to Gln-282 are cytoplasmic. A helical membrane pass occupies residues Leu-283–Phe-306. N-linked (GlcNAc...) asparagine glycosylation is present at Asn-307. The Extracellular portion of the chain corresponds to Asn-307–Phe-326. A helical transmembrane segment spans residues Phe-327–Leu-348. The Cytoplasmic segment spans residues Arg-349 to Gln-417.

The protein belongs to the G-protein coupled receptor 1 family. As to quaternary structure, interacts (via C-terminus) with MKLN1.

It is found in the cell membrane. Receptor for prostaglandin E2 (PGE2). The various isoforms have identical ligand binding properties but interact with different second messenger systems: isoform EP3A couples to G(i)/G(o) proteins; isoform EP3B and isoform EP3C couple to G(s), and isoform EP3D couples to G(i), G(s) and G(p). Required for normal development of fever in response to pyrinogens, including IL1B, prostaglandin E2 and bacterial lipopolysaccharide (LPS). Required for normal potentiation of platelet aggregation by prostaglandin E2, and thus plays a role in the regulation of blood coagulation. Required for increased HCO3(-) secretion in the duodenum in response to mucosal acidification, and thereby contributes to the protection of the mucosa against acid-induced ulceration. Not required for normal kidney function, normal urine volume and osmolality. This chain is Prostaglandin E2 receptor EP3 subtype (PTGER3), found in Bos taurus (Bovine).